Reading from the N-terminus, the 314-residue chain is Cytochrome bo(3) ubiquinol oxidase subunit 2 (314 aa).

Residues 1–23 form the signal peptide; that stretch reads MSKKRYPRLFGILPFLGMLLLSG. C24 carries N-palmitoyl cysteine lipidation. C24 is lipidated: S-diacylglycerol cysteine. Residues 24–42 are Periplasmic-facing; the sequence is CNWTLLDPKGQVGIEQKNL. A helical membrane pass occupies residues 43-63; that stretch reads ILIATGLMLLVVIPVIIMTVV. Topologically, residues 64-86 are cytoplasmic; it reads FAWKYRASNKAATYTPDWSHSTK. A helical transmembrane segment spans residues 87–107; the sequence is IEAAVWIIPILIIIALGYFTY. Topologically, residues 108-314 are periplasmic; that stretch reads HSTHKLDPYR…SMQPAAGAEE (207 aa). The span at 278–293 shows a compositional bias: basic and acidic residues; it reads YEGMNRGRPSHEEAGS. The tract at residues 278-314 is disordered; the sequence is YEGMNRGRPSHEEAGSKDLATTKGVESSMQPAAGAEE.

Belongs to the cytochrome c oxidase subunit 2 family. As to quaternary structure, heterooctamer of two A chains, two B chains, two C chains and two D chains.

It localises to the cell inner membrane. In terms of biological role, cytochrome bo(3) ubiquinol terminal oxidase is the component of the aerobic respiratory chain of E.coli that predominates when cells are grown at high aeration. Has proton pump activity across the membrane in addition to electron transfer, pumping 2 protons/electron. The sequence is that of Cytochrome bo(3) ubiquinol oxidase subunit 2 (cyoA) from Pseudomonas putida (Arthrobacter siderocapsulatus).